Here is a 216-residue protein sequence, read N- to C-terminus: uncharacterized protein (216 aa).

In terms of domain architecture, N-acetyltransferase spans 1–216; that stretch reads MVVKIVEAYE…DVTFLKLKLK (216 aa).

It belongs to the acetyltransferase family.

This is an uncharacterized protein from Dictyostelium discoideum (Social amoeba).